The sequence spans 185 residues: Ribosome-recycling factor (185 aa).

The protein belongs to the RRF family.

It is found in the cytoplasm. Responsible for the release of ribosomes from messenger RNA at the termination of protein biosynthesis. May increase the efficiency of translation by recycling ribosomes from one round of translation to another. This chain is Ribosome-recycling factor, found in Symbiobacterium thermophilum (strain DSM 24528 / JCM 14929 / IAM 14863 / T).